The chain runs to 288 residues: Rhythmically expressed gene 5 protein (288 aa).

In terms of tissue distribution, expressed in head, but not in the body. Expression levels oscillate with the circadian rhythm.

Involved in the generation of biological rhythms (Potential). In the head, oscillates in abundance with a daily peak during early night, even under constant darkness. Oscillation is dependent on period (per) function. The protein is Rhythmically expressed gene 5 protein (Reg-5) of Drosophila melanogaster (Fruit fly).